Consider the following 146-residue polypeptide: Ribonuclease H (146 aa).

The RNase H type-1 domain occupies 1-136; it reads MKHIEIYTDG…CDTLAREAAL (136 aa). The Mg(2+) site is built by D9, E47, D69, and D128.

It belongs to the RNase H family. In terms of assembly, monomer. The cofactor is Mg(2+).

Its subcellular location is the cytoplasm. The catalysed reaction is Endonucleolytic cleavage to 5'-phosphomonoester.. Functionally, endonuclease that specifically degrades the RNA of RNA-DNA hybrids. The chain is Ribonuclease H from Campylobacter jejuni subsp. jejuni serotype O:23/36 (strain 81-176).